The chain runs to 429 residues: Probable M18 family aminopeptidase 2 (429 aa).

3 residues coordinate Zn(2+): histidine 82, histidine 156, and histidine 401.

Belongs to the peptidase M18 family. Zn(2+) is required as a cofactor.

This is Probable M18 family aminopeptidase 2 from Pseudomonas syringae pv. tomato (strain ATCC BAA-871 / DC3000).